Here is a 344-residue protein sequence, read N- to C-terminus: Phenylalanine--tRNA ligase alpha subunit (344 aa).

Glutamate 256 is a Mg(2+) binding site.

Belongs to the class-II aminoacyl-tRNA synthetase family. Phe-tRNA synthetase alpha subunit type 1 subfamily. As to quaternary structure, tetramer of two alpha and two beta subunits. Requires Mg(2+) as cofactor.

Its subcellular location is the cytoplasm. The enzyme catalyses tRNA(Phe) + L-phenylalanine + ATP = L-phenylalanyl-tRNA(Phe) + AMP + diphosphate + H(+). In Onion yellows phytoplasma (strain OY-M), this protein is Phenylalanine--tRNA ligase alpha subunit.